The sequence spans 245 residues: MAPK-interacting and spindle-stabilizing protein-like (245 aa).

Residues 1 to 245 (MSDEFSLADA…PMPGGPHSYH (245 aa)) form a disordered region. Serine 2 bears the N-acetylserine mark. Phosphoserine is present on residues serine 2, serine 6, and serine 15. Positions 17–26 (AKTSAVSNTK) are enriched in polar residues. Residues 34-51 (WPGSNPWNNPSAPSSVPS) show a composition bias toward low complexity. 3 stretches are compositionally biased toward pro residues: residues 74–127 (SVPP…PELP), 164–190 (PNMP…PPVP), and 198–207 (AWGPPAPYPA).

The protein belongs to the MISS family.

This chain is MAPK-interacting and spindle-stabilizing protein-like (MAPK1IP1L), found in Homo sapiens (Human).